Consider the following 284-residue polypeptide: Tropomyosin-1 (284 aa).

Disordered stretches follow at residues 1–26 and 96–124; these read MDAI…DTCE and EEDL…DENN. Residues 1 to 276 are a coiled coil; that stretch reads MDAIKKKMQA…YKSLADEMDS (276 aa). The segment covering 12–26 has biased composition (basic and acidic residues); that stretch reads KLEKDNAMDKADTCE. Over residues 107-121 the composition is skewed to polar residues; that stretch reads GTAQQKLLEAQQSAD.

This sequence belongs to the tropomyosin family. Homodimer.

In terms of biological role, tropomyosin, in association with the troponin complex, plays a central role in the calcium dependent regulation of muscle contraction. The sequence is that of Tropomyosin-1 from Bombyx mori (Silk moth).